The following is a 541-amino-acid chain: Cytochrome P450 monooxygenase claU (541 aa).

The helical transmembrane segment at 12-32 (VIDTLVILFSTWAFLGLIRVI) threads the bilayer. C480 lines the heme pocket.

Belongs to the cytochrome P450 family. Heme is required as a cofactor.

It localises to the membrane. It participates in secondary metabolite biosynthesis; terpenoid biosynthesis. Its function is as follows. Cytochrome P450 monooxygenase; part of the gene cluster that mediates the biosynthesis of clavilactone A, a meroterpenoid that features a unique benzo-fused ten-membered carbocyclic ring unit with an alpha,beta-epoxy-gamma-lactone moiety, forming an intriguing 10/5/3 tricyclic nested skeleton. Cytochrome P450 monooxygenases claO, claP, claQ, claU, and claW are close orthologs, suggesting that a redundant function or pseudogenes are present in the cla cluster. These monoxygenases are not involved in clavilactone A biosynthesis nor its modification. ClaR, ClaS and ClaT are sufficient to produce clavilactone A. The biosynthesis begins with the prenyltransferase claS that transfers geranyl pyrophosphate (GPP) to hydroquinone to produces geranylhydroquinone. The cytochrome P450 monooxygenase claR then catalyzes the diradical coupling reaction between the intramolecular hydroquinone and allyl moieties to form the benzo-fused ten-membered carbocyclic ring unit of wigantol. Finally the cytochrome P450 monooxygenase claT exquisitely and stereoselectively assembles the alpha,beta-epoxy-gamma-lactone moiety, producing clavilactone A via arnebinol A. This is Cytochrome P450 monooxygenase claU from Ampulloclitocybe clavipes (Club foot).